The sequence spans 512 residues: Serine palmitoyltransferase 3 (512 aa).

Position 345 is an N6-(pyridoxal phosphate)lysine (lysine 345).

The protein belongs to the class-II pyridoxal-phosphate-dependent aminotransferase family. Heterodimer of sptl-1/sptl-3. It depends on pyridoxal 5'-phosphate as a cofactor.

The enzyme catalyses L-serine + hexadecanoyl-CoA + H(+) = 3-oxosphinganine + CO2 + CoA. It participates in lipid metabolism; sphingolipid metabolism. Its function is as follows. Component of the serine palmitoyltransferase (SPT) that catalyzes the first committed step in sphingolipid biosynthesis, which is the condensation of an acyl-CoA species and L-serine. The catalytic core is composed of a heterodimer of sptl-1 and sptl-2 or sptl-1 and sptl-3. Required for the specification of abicobasal polarity and development of the gut lumen. This is Serine palmitoyltransferase 3 (sptl-3) from Caenorhabditis elegans.